The chain runs to 60 residues: Large ribosomal subunit protein uL30 (60 aa).

The protein belongs to the universal ribosomal protein uL30 family. Part of the 50S ribosomal subunit.

The chain is Large ribosomal subunit protein uL30 from Streptococcus uberis (strain ATCC BAA-854 / 0140J).